The primary structure comprises 332 residues: Malate dehydrogenase (332 aa).

NAD(+) contacts are provided by residues 11–16 and Asp-35; that span reads GAGNVG. 2 residues coordinate substrate: Arg-97 and Arg-103. Residues Asn-110 and 133–135 each bind NAD(+); that span reads VTN. Substrate is bound by residues Asn-135 and Arg-166. The Proton acceptor role is filled by His-190.

It belongs to the LDH/MDH superfamily. MDH type 3 family.

The enzyme catalyses (S)-malate + NAD(+) = oxaloacetate + NADH + H(+). In terms of biological role, catalyzes the reversible oxidation of malate to oxaloacetate. The polypeptide is Malate dehydrogenase (Hydrogenobaculum sp. (strain Y04AAS1)).